A 209-amino-acid chain; its full sequence is Redox-sensing transcriptional repressor Rex (209 aa).

Positions 16-55 form a DNA-binding region, H-T-H motif; the sequence is LYYRFIQNLSLSGKQRVSSAELSEAVKVDSATIRRDFSYF. Residue 90–95 coordinates NAD(+); that stretch reads GVGNLG.

This sequence belongs to the transcriptional regulatory Rex family. As to quaternary structure, homodimer.

The protein resides in the cytoplasm. In terms of biological role, modulates transcription in response to changes in cellular NADH/NAD(+) redox state. This is Redox-sensing transcriptional repressor Rex from Bacillus anthracis (strain A0248).